A 662-amino-acid chain; its full sequence is UvrABC system protein B (662 aa).

The region spanning 31-188 (DNIEGGEKAQ…NDLVDIQFER (158 aa)) is the Helicase ATP-binding domain. Position 44-51 (44-51 (GATGTGKT)) interacts with ATP. Positions 97–120 (YYDYYQPEAYVPSSDTYIEKDSSV) match the Beta-hairpin motif. Residues 435–601 (QIDDLLGEIN…TIKKEIRDLI (167 aa)) form the Helicase C-terminal domain. Residues 626–661 (KDMIKKLEGQMQEAAGLLDFELAAQIRDMILEIKAM) enclose the UVR domain.

Belongs to the UvrB family. As to quaternary structure, forms a heterotetramer with UvrA during the search for lesions. Interacts with UvrC in an incision complex.

The protein localises to the cytoplasm. Functionally, the UvrABC repair system catalyzes the recognition and processing of DNA lesions. A damage recognition complex composed of 2 UvrA and 2 UvrB subunits scans DNA for abnormalities. Upon binding of the UvrA(2)B(2) complex to a putative damaged site, the DNA wraps around one UvrB monomer. DNA wrap is dependent on ATP binding by UvrB and probably causes local melting of the DNA helix, facilitating insertion of UvrB beta-hairpin between the DNA strands. Then UvrB probes one DNA strand for the presence of a lesion. If a lesion is found the UvrA subunits dissociate and the UvrB-DNA preincision complex is formed. This complex is subsequently bound by UvrC and the second UvrB is released. If no lesion is found, the DNA wraps around the other UvrB subunit that will check the other stand for damage. The protein is UvrABC system protein B of Streptococcus gordonii (strain Challis / ATCC 35105 / BCRC 15272 / CH1 / DL1 / V288).